An 89-amino-acid chain; its full sequence is Elongation factor 1-beta (89 aa).

This sequence belongs to the EF-1-beta/EF-1-delta family.

In terms of biological role, promotes the exchange of GDP for GTP in EF-1-alpha/GDP, thus allowing the regeneration of EF-1-alpha/GTP that could then be used to form the ternary complex EF-1-alpha/GTP/AAtRNA. The sequence is that of Elongation factor 1-beta from Methanococcus maripaludis (strain DSM 14266 / JCM 13030 / NBRC 101832 / S2 / LL).